A 94-amino-acid polypeptide reads, in one-letter code: Defensin alpha 5 (94 aa).

The signal sequence occupies residues 1–19; the sequence is MRTIAILAAILLVALQAQA. Cystine bridges form between Cys-65–Cys-93, Cys-67–Cys-82, and Cys-72–Cys-92.

Belongs to the alpha-defensin family. As to quaternary structure, homodimer. Homotetramer. Interacts with B.antracis lef/lethal factor. In terms of processing, glycosylated. Post-translationally, proteolytically cleaved at Arg-62 by trypsin. Both the propeptide form proHD5/HD5(20-94) and HD5(56-94) are cleaved into the lumenal peptide form HD5(63-94) by trypsin. Unprocessed proHD5 exerts antimicrobial activities, but peptide potency is enhanced by peptide processing. Proteolytically cleaved in duodenal fluid; derived fragments are antimicrobially active against commensal bacteria (in vitro). (Microbial infection) The disulfide bridges and homodimerization are a prerequisite for the enhancement of S.flexneri adhesion and invasion. Expressed in the gastrointestinal, reproductive, and urinary tracts (at protein level). Expressed in Paneth cells of the small intestine (at protein level). Expressed throughout the urothelium of the lower urinary tract and in the collecting tubules of the kidney (at protein level). Expressed in stratified squamous epithelial cells of the female genital tract epithelia, such as in vagina, ectocervix, endocervix, endometrium, and fallopian tube (at protein level). Endometrial expression correlates with stages of the menstrual cycle: Expression is low during the early proliferative phase, increased during the mid- to late proliferative phase, peaks during the early secretory phase of the cycle, and decreases during the mid- to late secretory phase.

It localises to the secreted. The protein localises to the cytoplasmic vesicle. Its subcellular location is the secretory vesicle. Its function is as follows. Host-defense peptide that maintains sterility in the urogenital system. Has antimicrobial activity against a wide range of bacteria, including Gram-negative E.coli, P.aeruginosa and S.typhimurium, and Gram-positive E.aerogenes, S.aureus, B.cereus, E.faecium and L.monocytogenes. Confers resistance to intestinal infection by S.typhimurium. Exhibits antimicrobial activity against enteric commensal bacteria such as B.adolescentis, L.acidophilus, B.breve, L.fermentum, B.longum and S.thermophilus. Binds to bacterial membranes and causes membrane disintegration. Induces the secretion of the chemokine IL-8 by intestinal epithelial cells. Binds to B.antracis lef/lethal factor, a major virulence factor from B.anthracis, and neutralizes its enzymatic activity. Functionally, (Microbial infection) Acts as a target for S.flexneri infection by binding to the bacterium, possibly via bacterial surface proteins, and thereby augmenting infectivity via enhanced bacterial adhesion and invasion of epithelial cells and tissues. The protein is Defensin alpha 5 (DEFA5) of Homo sapiens (Human).